Reading from the N-terminus, the 101-residue chain is Phosphoribosyl-AMP cyclohydrolase (101 aa).

Asp-71 contributes to the Mg(2+) binding site. Zn(2+) is bound at residue Cys-72. Mg(2+)-binding residues include Asp-73 and Asp-75. Zn(2+)-binding residues include Cys-88 and Cys-95.

Belongs to the PRA-CH family. As to quaternary structure, homodimer. Mg(2+) serves as cofactor. Zn(2+) is required as a cofactor.

It is found in the cytoplasm. It catalyses the reaction 1-(5-phospho-beta-D-ribosyl)-5'-AMP + H2O = 1-(5-phospho-beta-D-ribosyl)-5-[(5-phospho-beta-D-ribosylamino)methylideneamino]imidazole-4-carboxamide. Its pathway is amino-acid biosynthesis; L-histidine biosynthesis; L-histidine from 5-phospho-alpha-D-ribose 1-diphosphate: step 3/9. Catalyzes the hydrolysis of the adenine ring of phosphoribosyl-AMP. The protein is Phosphoribosyl-AMP cyclohydrolase of Bacillus cereus (strain B4264).